The chain runs to 108 residues: uncharacterized protein (108 aa).

3 consecutive transmembrane segments (helical) span residues 4–24 (IIFL…FFSM), 46–66 (GMMV…IFIG), and 81–101 (IMAI…WFVL).

The protein resides in the cell membrane. This is an uncharacterized protein from Escherichia coli O157:H7.